The sequence spans 1427 residues: Coiled-coil domain-containing protein 144A (1427 aa).

The segment covering 1–11 has biased composition (basic and acidic residues); the sequence is MASWGGEKRGG. 5 disordered regions span residues 1–32, 87–189, 213–261, 453–485, and 528–586; these read MASWGGEKRGGAEGSPKPAVYATRKTPSVGSQ, AARS…LTER, LPEN…CDRE, NMNQNSDSGSTNNYKSLKPKLENLSSLPPDSDR, and EEEM…EVKN. Polar residues-rich tracts occupy residues 129 to 150 and 167 to 178; these read PESLPQNNNPDWHPTNLTLSDE and VSPSMPENQSAT. Acidic residues predominate over residues 224 to 234; the sequence is QDSELTSEEEQ. Residues 453–467 show a composition bias toward polar residues; sequence NMNQNSDSGSTNNYK. Residues 490–545 adopt a coiled-coil conformation; it reads YLHEELQQDMQKFKNEVNTLEEEFLALKKEDVQLHKDVEEEMEKHRSNSTELSGTL. The span at 528–537 shows a compositional bias: basic and acidic residues; that stretch reads EEEMEKHRSN. Positions 543–552 are enriched in low complexity; the sequence is GTLTDGTTVG. A compositionally biased stretch (basic and acidic residues) spans 563-584; it reads PRKENGEHDRPADKTSNEKNEV. Coiled-coil stretches lie at residues 648–1129 and 1155–1309; these read LLKL…DLTE and FSMK…TQLT.

Belongs to the CCDC144 family.

May play a role in preventing the formation of kidney stones through inhibition of calcium oxalate monohydrate (COM) crystallization, attenuating COM-induced apoptotic injury to renal epithelial cells. May exhibit antilithiatic (preventing the formation of kidney stones) activity through crystal binding, hindering the crystal attachment to renal epithelial cells, a pre-requisite to initiate inflammatory response. This chain is Coiled-coil domain-containing protein 144A (CCDC144A), found in Homo sapiens (Human).